The following is a 465-amino-acid chain: 6-phospho-beta-glucosidase (465 aa).

Residue Glu-173 is the Proton donor of the active site. The Nucleophile role is filled by Glu-362.

It belongs to the glycosyl hydrolase 1 family.

It carries out the reaction 6-phospho-beta-D-glucosyl-(1-&gt;4)-D-glucose + H2O = D-glucose 6-phosphate + D-glucose. It participates in carbohydrate metabolism; beta-glucoside metabolism. The protein is 6-phospho-beta-glucosidase (arbB) of Dickeya chrysanthemi (Pectobacterium chrysanthemi).